Consider the following 441-residue polypeptide: tRNA modification GTPase MnmE (441 aa).

Positions 23, 81, and 121 each coordinate (6S)-5-formyl-5,6,7,8-tetrahydrofolate. The TrmE-type G domain occupies Gly-218–Ser-363. Residue Asn-228 coordinates K(+). Residues Asn-228–Ser-233, Thr-247–Thr-253, Asp-272–Gly-275, and Asn-326–Asp-329 each bind GTP. Ser-232 is a binding site for Mg(2+). The K(+) site is built by Thr-247, Ile-249, and Thr-252. Mg(2+) is bound at residue Thr-253. Lys-441 contacts (6S)-5-formyl-5,6,7,8-tetrahydrofolate.

It belongs to the TRAFAC class TrmE-Era-EngA-EngB-Septin-like GTPase superfamily. TrmE GTPase family. Homodimer. Heterotetramer of two MnmE and two MnmG subunits. K(+) serves as cofactor.

It localises to the cytoplasm. Its function is as follows. Exhibits a very high intrinsic GTPase hydrolysis rate. Involved in the addition of a carboxymethylaminomethyl (cmnm) group at the wobble position (U34) of certain tRNAs, forming tRNA-cmnm(5)s(2)U34. This chain is tRNA modification GTPase MnmE, found in Hyphomonas neptunium (strain ATCC 15444).